Reading from the N-terminus, the 465-residue chain is Hydroxyacid-oxoacid transhydrogenase, mitochondrial (465 aa).

Belongs to the iron-containing alcohol dehydrogenase family. Hydroxyacid-oxoacid transhydrogenase subfamily.

The protein localises to the mitochondrion. The enzyme catalyses (S)-3-hydroxybutanoate + 2-oxoglutarate = (R)-2-hydroxyglutarate + acetoacetate. The catalysed reaction is 4-hydroxybutanoate + 2-oxoglutarate = (R)-2-hydroxyglutarate + succinate semialdehyde. Functionally, catalyzes the cofactor-independent reversible oxidation of gamma-hydroxybutyrate (GHB) to succinic semialdehyde (SSA) coupled to reduction of 2-ketoglutarate (2-KG) to D-2-hydroxyglutarate (D-2-HG). L-3-hydroxybutyrate (L-3-OHB) is also a substrate for HOT when using 2-KG as hydrogen acceptor, resulting in the formation of D-2-HG. This chain is Hydroxyacid-oxoacid transhydrogenase, mitochondrial, found in Caenorhabditis elegans.